The chain runs to 457 residues: MTVTVRFAPSPTGYIHIGNTRTALSNWLYASKNNGKFILRYDDTDVERSKDEYAQAIAVDLDWLGVRPDRVEYQSKRFDIYAKAVEKLKTAGLLYACYETADELERRRKFRLARRLPPVYGREALKLTDAEKAALEAEGRKPHWRFLLPNFESDPFATQRTEVHWDDLVRGPQTVDLASMSDPILVREDGTYLYTLPSVVDDIDMGVTHIIRGDDHVTNTGVQISIFKALGATPPVFGHHNLLTTISGEGLSKRTGALSVGSLREAGYEPMAVASLAILIGTSESVTAAPDMAALAEHFDLASISKSSAKFDPSELDALNRSLLHEMPFEKAKPRLEALGICGAKAESFWLAVRGNLDRFSDVSHWWQVVSGDLPEAPDLSGEDRDFVRHAFDLLPPEPWNGQTWKSWTEAVKSATGRKGKNLFMPLRLALTGQAHGPELADLLVLVGLERTKSRRP.

The 'HIGH' region signature appears at 9 to 19 (PSPTGYIHIGN). Residues 250–254 (GLSKR) carry the 'KMSKS' region motif. Lysine 253 contacts ATP.

It belongs to the class-I aminoacyl-tRNA synthetase family. Glutamate--tRNA ligase type 1 subfamily. As to quaternary structure, monomer.

It localises to the cytoplasm. The enzyme catalyses tRNA(Glu) + L-glutamate + ATP = L-glutamyl-tRNA(Glu) + AMP + diphosphate. In terms of biological role, catalyzes the attachment of glutamate to tRNA(Glu) in a two-step reaction: glutamate is first activated by ATP to form Glu-AMP and then transferred to the acceptor end of tRNA(Glu). This Brucella abortus (strain S19) protein is Glutamate--tRNA ligase 1.